Reading from the N-terminus, the 189-residue chain is Interferon alpha-F (189 aa).

The N-terminal stretch at 1–23 (MAPAWSLLLALLLLSCNAICSLG) is a signal peptide. 2 disulfides stabilise this stretch: cysteine 24/cysteine 122 and cysteine 52/cysteine 162.

This sequence belongs to the alpha/beta interferon family.

It localises to the secreted. Its function is as follows. Produced by macrophages, IFN-alpha have antiviral activities. Interferon stimulates the production of two enzymes: a protein kinase and an oligoadenylate synthetase. The protein is Interferon alpha-F (IFNAF) of Bos taurus (Bovine).